Here is a 108-residue protein sequence, read N- to C-terminus: UPF0060 membrane protein SAB2216c (108 aa).

The next 4 membrane-spanning stretches (helical) occupy residues 5 to 25, 31 to 51, 60 to 80, and 86 to 106; these read IFIF…IWLW, CSLV…IATF, VYAA…MVVD, and KYDV…LLPS.

This sequence belongs to the UPF0060 family.

Its subcellular location is the cell membrane. The chain is UPF0060 membrane protein SAB2216c from Staphylococcus aureus (strain bovine RF122 / ET3-1).